Consider the following 178-residue polypeptide: Large ribosomal subunit protein uL6 (178 aa).

Belongs to the universal ribosomal protein uL6 family. In terms of assembly, part of the 50S ribosomal subunit.

Functionally, this protein binds to the 23S rRNA, and is important in its secondary structure. It is located near the subunit interface in the base of the L7/L12 stalk, and near the tRNA binding site of the peptidyltransferase center. In Streptococcus agalactiae serotype Ia (strain ATCC 27591 / A909 / CDC SS700), this protein is Large ribosomal subunit protein uL6.